A 259-amino-acid polypeptide reads, in one-letter code: GEM-like protein 1 (259 aa).

A compositionally biased stretch (basic and acidic residues) spans 1-11 (MSGQENHDHGR). The segment at 1-79 (MSGQENHDHG…PSPAPRNTMD (79 aa)) is disordered. Over residues 13–30 (SSTPAAASEPSKAAAHSS) the composition is skewed to low complexity. A GRAM domain is found at 138–215 (KVFKQTFDCL…NQLKAVNPST (78 aa)).

It belongs to the GEM family. In terms of assembly, interacts with AFH1.

The chain is GEM-like protein 1 (FIP1) from Arabidopsis thaliana (Mouse-ear cress).